The primary structure comprises 279 residues: Probable endonuclease 4 (279 aa).

Residues His-69, His-109, Glu-145, Asp-179, His-182, His-216, Asp-229, His-231, and Glu-261 each contribute to the Zn(2+) site.

Belongs to the AP endonuclease 2 family. Zn(2+) serves as cofactor.

It catalyses the reaction Endonucleolytic cleavage to 5'-phosphooligonucleotide end-products.. Endonuclease IV plays a role in DNA repair. It cleaves phosphodiester bonds at apurinic or apyrimidinic (AP) sites, generating a 3'-hydroxyl group and a 5'-terminal sugar phosphate. The sequence is that of Probable endonuclease 4 from Serratia proteamaculans (strain 568).